The chain runs to 630 residues: Terpinolene synthase, chloroplastic (630 aa).

The transit peptide at 1–52 (MALVSILPLSSKSVLHKSWIVSTYEHKAISRTIPNLGLRGRGKSVTHSLRMS) directs the protein to the chloroplast. Positions 381, 385, 525, and 533 each coordinate Mg(2+). Positions 381–385 (DDIYD) match the DDXXD motif motif.

This sequence belongs to the terpene synthase family. Tpsd subfamily. Mg(2+) is required as a cofactor. The cofactor is Mn(2+). It depends on K(+) as a cofactor.

It is found in the plastid. It localises to the chloroplast. It catalyses the reaction (2E)-geranyl diphosphate = terpinolene + diphosphate. Its pathway is terpene metabolism; oleoresin biosynthesis. In terms of biological role, involved in defensive oleoresin formation in conifers in response to insect attack or other injury. Involved in monoterpene (C10) olefins biosynthesis. This Abies grandis (Grand fir) protein is Terpinolene synthase, chloroplastic (ag9).